A 107-amino-acid chain; its full sequence is Phosphoribosyl-ATP pyrophosphatase (107 aa).

It belongs to the PRA-PH family.

The protein localises to the cytoplasm. It carries out the reaction 1-(5-phospho-beta-D-ribosyl)-ATP + H2O = 1-(5-phospho-beta-D-ribosyl)-5'-AMP + diphosphate + H(+). Its pathway is amino-acid biosynthesis; L-histidine biosynthesis; L-histidine from 5-phospho-alpha-D-ribose 1-diphosphate: step 2/9. The protein is Phosphoribosyl-ATP pyrophosphatase of Rhizobium etli (strain CIAT 652).